Consider the following 230-residue polypeptide: Leucyl/phenylalanyl-tRNA--protein transferase (230 aa).

The protein belongs to the L/F-transferase family.

The protein resides in the cytoplasm. The catalysed reaction is N-terminal L-lysyl-[protein] + L-leucyl-tRNA(Leu) = N-terminal L-leucyl-L-lysyl-[protein] + tRNA(Leu) + H(+). The enzyme catalyses N-terminal L-arginyl-[protein] + L-leucyl-tRNA(Leu) = N-terminal L-leucyl-L-arginyl-[protein] + tRNA(Leu) + H(+). It carries out the reaction L-phenylalanyl-tRNA(Phe) + an N-terminal L-alpha-aminoacyl-[protein] = an N-terminal L-phenylalanyl-L-alpha-aminoacyl-[protein] + tRNA(Phe). Functions in the N-end rule pathway of protein degradation where it conjugates Leu, Phe and, less efficiently, Met from aminoacyl-tRNAs to the N-termini of proteins containing an N-terminal arginine or lysine. In Rhodopseudomonas palustris (strain BisB18), this protein is Leucyl/phenylalanyl-tRNA--protein transferase.